A 226-amino-acid chain; its full sequence is Probable chemoreceptor glutamine deamidase CheD (226 aa).

The protein belongs to the CheD family.

It catalyses the reaction L-glutaminyl-[protein] + H2O = L-glutamyl-[protein] + NH4(+). Functionally, probably deamidates glutamine residues to glutamate on methyl-accepting chemotaxis receptors (MCPs), playing an important role in chemotaxis. The polypeptide is Probable chemoreceptor glutamine deamidase CheD (Bordetella avium (strain 197N)).